Consider the following 40-residue polypeptide: Photosystem II reaction center protein Y (40 aa).

The chain crosses the membrane as a helical span at residues 5–23 (LVLVASPILLAVGWAGFNI).

Belongs to the PsbY family. In terms of assembly, PSII is composed of 1 copy each of membrane proteins PsbA, PsbB, PsbC, PsbD, PsbE, PsbF, PsbH, PsbI, PsbJ, PsbK, PsbL, PsbM, PsbT, PsbX, PsbY, PsbZ, Psb30/Ycf12, peripheral proteins PsbO, CyanoQ (PsbQ), PsbU, PsbV and a large number of cofactors. It forms dimeric complexes.

It is found in the cellular thylakoid membrane. In terms of biological role, loosely associated component of the core of photosystem II (PSII), it is not always seen in crystals. PSII is a light-driven water plastoquinone oxidoreductase, using light energy to abstract electrons from H(2)O, generating a proton gradient subsequently used for ATP formation. The sequence is that of Photosystem II reaction center protein Y from Synechococcus sp. (strain RCC307).